A 356-amino-acid chain; its full sequence is Ubiquitin-conjugating enzyme E2 variant 3 (356 aa).

Residues Met1–Glu83 are disordered. Residues Pro18 to Ile32 are compositionally biased toward polar residues. Residues Gln63–Asp76 show a composition bias toward basic and acidic residues. Positions Asp169 to Gly324 constitute a UBC core domain.

It belongs to the ubiquitin-conjugating enzyme family. As to quaternary structure, may interact with pmk-3. In terms of tissue distribution, expressed ubiquitously.

The protein resides in the nucleus. Its subcellular location is the cytoplasm. It localises to the cell projection. It is found in the dendrite. The protein localises to the axon. The protein resides in the cilium. Its function is as follows. Possible negative regulator of polyubiquitination. May modulate the activity of the p38 MAP kinase pnk-3. May have a role in axon termination and synaptic transmission at motor and mechanosensory neurons. Plays a role in intraflagellar transport in cilia and cilium length regulation. This chain is Ubiquitin-conjugating enzyme E2 variant 3, found in Caenorhabditis elegans.